The following is a 272-amino-acid chain: Small ribosomal subunit protein mS23 (272 aa).

Positions 233–272 (KENASKAAGDASAVSSEKQVEDDVVNFDESTDADQEVLHF) are disordered. Residues 252-272 (VEDDVVNFDESTDADQEVLHF) are compositionally biased toward acidic residues.

Belongs to the mitochondrion-specific ribosomal protein mS23 family. Component of the mitochondrial small ribosomal subunit.

The protein resides in the mitochondrion. The protein is Small ribosomal subunit protein mS23 (RSM25) of Candida glabrata (strain ATCC 2001 / BCRC 20586 / JCM 3761 / NBRC 0622 / NRRL Y-65 / CBS 138) (Yeast).